Reading from the N-terminus, the 1854-residue chain is Dystrophin, isoform D (1854 aa).

Disordered regions lie at residues 1–65 (MTTT…PIYA), 84–161 (GSTT…YEMP), 240–352 (QSPT…MSPA), 516–548 (LKPT…PTPS), 595–650 (TPGG…TSES), 716–740 (VMSK…PSTA), 783–830 (LKLQ…STTP), and 1012–1036 (VSDT…EQSR). 2 stretches are compositionally biased toward low complexity: residues 11-37 (QRQQ…QQHQ) and 84-96 (GSTT…LQSS). The span at 143–157 (GLSSAQPATSASSGN) shows a compositional bias: polar residues. The segment covering 276–296 (QQQQQQQQAGINGQINGNGNQ) has biased composition (low complexity). Composition is skewed to polar residues over residues 331 to 345 (TLSR…SSAD) and 518 to 536 (PTST…SNTA). The segment covering 595–606 (TPGGGVVGGQAA) has biased composition (gly residues). A compositionally biased stretch (polar residues) spans 716 to 727 (VMSKSNSSLGSV). 2 stretches are compositionally biased toward low complexity: residues 728 to 740 (TTPS…PSTA) and 783 to 814 (LKLQ…QQIQ). Residues 815–830 (NGFASDDNSSSCSTTP) are compositionally biased toward polar residues. Spectrin repeat units lie at residues 936–1069 (EHWN…RLDE) and 1072–1176 (TKMR…VLCQ). Residues 1179–1209 (AQQTHENGDDGRTTSNSGTIGPLPNLGQSVK) are disordered. The 34-residue stretch at 1206-1239 (QSVKPPWERATTAANVPYYIDHERETTHWDHPEM) folds into the WW domain. The segment at 1464 to 1520 (KHQAKCNICKEYPIVGFRYRCLKCFNFDMCQKCFFFGRNAKNHKLTHPMHEYCTTTT) adopts a ZZ-type zinc-finger fold. Residues C1469, C1472, C1484, C1487, C1493, C1496, H1506, and H1510 each contribute to the Zn(2+) site. At S1564 the chain carries Phosphoserine. 2 disordered regions span residues 1673-1701 (EQSG…GEQG) and 1744-1854 (DEPN…ELQK). 2 stretches are compositionally biased toward polar residues: residues 1682 to 1694 (NGMQ…MTGL) and 1765 to 1796 (ALNS…QQNG). Over residues 1815-1826 (QELESINDDLED) the composition is skewed to acidic residues. Low complexity predominate over residues 1827 to 1845 (SSSSNTTNTTTTTTTTATT).

In terms of assembly, component of the dystrophin associated protein complex (DAPC). Interacts with Dg, via the Dg WW domain binding sites. In terms of tissue distribution, during embryogenesis and in third instar larvae, expression is seen in pericardial cells of the dorsal vessel and in the ventral nerve cord. Expression is absent from both the embryonic and larval musculature.

The protein resides in the cell membrane. Its subcellular location is the sarcolemma. It is found in the cytoplasm. It localises to the cytoskeleton. Required for the maintenance of appropriate synaptic retrograde communication and the stabilization of muscle cell architecture or physiology. May play a role in anchoring the cytoskeleton to the plasma membrane. The polypeptide is Dystrophin, isoform D (Dys) (Drosophila melanogaster (Fruit fly)).